The chain runs to 899 residues: Translation initiation factor IF-2 (899 aa).

Disordered stretches follow at residues 115-137 (EAKA…LQTE), 170-189 (RGGG…EQKK), and 262-309 (DREI…HGFE). The 170-residue stretch at 399 to 568 (TRPPVVTIMG…LIQSELMELK (170 aa)) folds into the tr-type G domain. Positions 408–415 (GHVDHGKT) are G1. 408 to 415 (GHVDHGKT) provides a ligand contact to GTP. A G2 region spans residues 433–437 (GITQH). Residues 454-457 (DTPG) form a G3 region. Residues 454–458 (DTPGH) and 508–511 (NKMD) contribute to the GTP site. The interval 508-511 (NKMD) is G4. Positions 544 to 546 (SAH) are G5.

Belongs to the TRAFAC class translation factor GTPase superfamily. Classic translation factor GTPase family. IF-2 subfamily.

Its subcellular location is the cytoplasm. Functionally, one of the essential components for the initiation of protein synthesis. Protects formylmethionyl-tRNA from spontaneous hydrolysis and promotes its binding to the 30S ribosomal subunits. Also involved in the hydrolysis of GTP during the formation of the 70S ribosomal complex. The sequence is that of Translation initiation factor IF-2 from Acinetobacter baumannii (strain SDF).